The chain runs to 175 residues: Cytidylate kinase (175 aa).

7 to 15 (GLPGSGTTT) contacts ATP.

The protein belongs to the cytidylate kinase family. Type 2 subfamily.

The protein resides in the cytoplasm. It catalyses the reaction CMP + ATP = CDP + ADP. It carries out the reaction dCMP + ATP = dCDP + ADP. This is Cytidylate kinase from Methanococcoides burtonii (strain DSM 6242 / NBRC 107633 / OCM 468 / ACE-M).